We begin with the raw amino-acid sequence, 227 residues long: Cytochrome c oxidase subunit 2 (227 aa).

At 1 to 14 (MAYPMQLGFQDATS) the chain is on the mitochondrial intermembrane side. Residues 15–45 (PIMEELLHFHDHTLMIVFLISSLVLYIISLM) form a helical membrane-spanning segment. The Mitochondrial matrix portion of the chain corresponds to 46–59 (LTTKLTHTSTMDAQ). The chain crosses the membrane as a helical span at residues 60–87 (EVETIWTILPAIILILIALPSLRILYMM). Over 88 to 227 (DEINNPSLTV…YFEKWSASML (140 aa)) the chain is Mitochondrial intermembrane. Residues His161, Cys196, Glu198, Cys200, His204, and Met207 each coordinate Cu cation. Glu198 serves as a coordination point for Mg(2+). Tyr218 carries the phosphotyrosine modification.

The protein belongs to the cytochrome c oxidase subunit 2 family. As to quaternary structure, component of the cytochrome c oxidase (complex IV, CIV), a multisubunit enzyme composed of 14 subunits. The complex is composed of a catalytic core of 3 subunits MT-CO1, MT-CO2 and MT-CO3, encoded in the mitochondrial DNA, and 11 supernumerary subunits COX4I, COX5A, COX5B, COX6A, COX6B, COX6C, COX7A, COX7B, COX7C, COX8 and NDUFA4, which are encoded in the nuclear genome. The complex exists as a monomer or a dimer and forms supercomplexes (SCs) in the inner mitochondrial membrane with NADH-ubiquinone oxidoreductase (complex I, CI) and ubiquinol-cytochrome c oxidoreductase (cytochrome b-c1 complex, complex III, CIII), resulting in different assemblies (supercomplex SCI(1)III(2)IV(1) and megacomplex MCI(2)III(2)IV(2)). Found in a complex with TMEM177, COA6, COX18, COX20, SCO1 and SCO2. Interacts with TMEM177 in a COX20-dependent manner. Interacts with COX20. Interacts with COX16. Cu cation is required as a cofactor.

It localises to the mitochondrion inner membrane. The catalysed reaction is 4 Fe(II)-[cytochrome c] + O2 + 8 H(+)(in) = 4 Fe(III)-[cytochrome c] + 2 H2O + 4 H(+)(out). In terms of biological role, component of the cytochrome c oxidase, the last enzyme in the mitochondrial electron transport chain which drives oxidative phosphorylation. The respiratory chain contains 3 multisubunit complexes succinate dehydrogenase (complex II, CII), ubiquinol-cytochrome c oxidoreductase (cytochrome b-c1 complex, complex III, CIII) and cytochrome c oxidase (complex IV, CIV), that cooperate to transfer electrons derived from NADH and succinate to molecular oxygen, creating an electrochemical gradient over the inner membrane that drives transmembrane transport and the ATP synthase. Cytochrome c oxidase is the component of the respiratory chain that catalyzes the reduction of oxygen to water. Electrons originating from reduced cytochrome c in the intermembrane space (IMS) are transferred via the dinuclear copper A center (CU(A)) of subunit 2 and heme A of subunit 1 to the active site in subunit 1, a binuclear center (BNC) formed by heme A3 and copper B (CU(B)). The BNC reduces molecular oxygen to 2 water molecules using 4 electrons from cytochrome c in the IMS and 4 protons from the mitochondrial matrix. This Bison bonasus (European bison) protein is Cytochrome c oxidase subunit 2 (MT-CO2).